The primary structure comprises 430 residues: Adenylosuccinate synthetase (430 aa).

GTP is bound by residues 13–19 (GDEGKGK) and 41–43 (GHT). Residue Asp14 is the Proton acceptor of the active site. Residues Asp14 and Gly41 each contribute to the Mg(2+) site. Residues 14–17 (DEGK), 39–42 (NAGH), Thr130, Arg144, Gln225, Thr240, and Arg304 contribute to the IMP site. Residue His42 is the Proton donor of the active site. 300 to 306 (ASTGRPR) contributes to the substrate binding site. GTP contacts are provided by residues Arg306, 332-334 (KLD), and 414-416 (STG).

Belongs to the adenylosuccinate synthetase family. As to quaternary structure, homodimer. The cofactor is Mg(2+).

The protein localises to the cytoplasm. It carries out the reaction IMP + L-aspartate + GTP = N(6)-(1,2-dicarboxyethyl)-AMP + GDP + phosphate + 2 H(+). Its pathway is purine metabolism; AMP biosynthesis via de novo pathway; AMP from IMP: step 1/2. Functionally, plays an important role in the de novo pathway of purine nucleotide biosynthesis. Catalyzes the first committed step in the biosynthesis of AMP from IMP. The sequence is that of Adenylosuccinate synthetase from Xylella fastidiosa (strain M23).